The chain runs to 416 residues: Serine protease inhibitor A3K (416 aa).

The signal sequence occupies residues 1–20 (MAFIAALGLLMAGICPAVLC). Asn-102, Asn-182, Asn-220, and Asn-267 each carry an N-linked (GlcNAc...) asparagine glycan. Residues 365 to 392 (GTEGAAATAVTAALKSLPQTIPLLNFNR) are RCL.

This sequence belongs to the serpin family. N-glycosylated. In terms of tissue distribution, liver and plasma.

Its subcellular location is the secreted. Its function is as follows. Binds to and inhibits kallikreins. Inhibits trypsin but not chymotrypsin or elastase. The chain is Serine protease inhibitor A3K (Serpina3k) from Rattus norvegicus (Rat).